A 143-amino-acid polypeptide reads, in one-letter code: Fluoride-specific ion channel FluC (143 aa).

4 consecutive transmembrane segments (helical) span residues 6–26 (CILVMIGGALGTLARYVVSVL), 38–58 (TILINVTGSFIIGLFGTLTLA), 70–90 (LFVMIGLCGGYTTFSSFSLQT), and 103–123 (MVNVCASVVLCVLAVALGHVV). The Na(+) site is built by Gly-78 and Thr-81.

The protein belongs to the fluoride channel Fluc/FEX (TC 1.A.43) family.

The protein resides in the cell inner membrane. The enzyme catalyses fluoride(in) = fluoride(out). With respect to regulation, na(+) is not transported, but it plays an essential structural role and its presence is essential for fluoride channel function. Functionally, fluoride-specific ion channel. Important for reducing fluoride concentration in the cell, thus reducing its toxicity. The protein is Fluoride-specific ion channel FluC of Methylobacterium radiotolerans (strain ATCC 27329 / DSM 1819 / JCM 2831 / NBRC 15690 / NCIMB 10815 / 0-1).